The sequence spans 250 residues: Putative beta-carotene-binding protein (250 aa).

Deposited in the epidermis and cuticle of male locusts during their sexual maturation.

Its function is as follows. Has beta-carotene-binding activity. May be involved in the transport of carotenes from internal tissues to epidermis and cuticle of the locust. The chain is Putative beta-carotene-binding protein from Schistocerca gregaria (Desert locust).